The primary structure comprises 92 residues: Small ribosomal subunit protein uS19c (92 aa).

It belongs to the universal ribosomal protein uS19 family.

It is found in the plastid. Its subcellular location is the chloroplast. Its function is as follows. Protein S19 forms a complex with S13 that binds strongly to the 16S ribosomal RNA. This chain is Small ribosomal subunit protein uS19c, found in Phaeodactylum tricornutum (strain CCAP 1055/1).